The primary structure comprises 195 residues: ATP-dependent Clp protease proteolytic subunit (195 aa).

Residue Ser-101 is the Nucleophile of the active site. Residue His-126 is part of the active site.

It belongs to the peptidase S14 family. Component of the chloroplastic Clp protease core complex.

The protein resides in the plastid. The protein localises to the chloroplast stroma. The enzyme catalyses Hydrolysis of proteins to small peptides in the presence of ATP and magnesium. alpha-casein is the usual test substrate. In the absence of ATP, only oligopeptides shorter than five residues are hydrolyzed (such as succinyl-Leu-Tyr-|-NHMec, and Leu-Tyr-Leu-|-Tyr-Trp, in which cleavage of the -Tyr-|-Leu- and -Tyr-|-Trp bonds also occurs).. Functionally, cleaves peptides in various proteins in a process that requires ATP hydrolysis. Has a chymotrypsin-like activity. Plays a major role in the degradation of misfolded proteins. The sequence is that of ATP-dependent Clp protease proteolytic subunit from Oltmannsiellopsis viridis (Marine flagellate).